Reading from the N-terminus, the 162-residue chain is NADH-quinone oxidoreductase subunit I (162 aa).

2 4Fe-4S ferredoxin-type domains span residues 52–82 and 93–122; these read LRRYPNGEERCIACKLCEAICPAKAITIEAG and TRYDIDMVKCIYCGFCQEACPVDAIVEGPN. [4Fe-4S] cluster contacts are provided by C62, C65, C68, C72, C102, C105, C108, and C112.

It belongs to the complex I 23 kDa subunit family. As to quaternary structure, NDH-1 is composed of 14 different subunits. Subunits NuoA, H, J, K, L, M, N constitute the membrane sector of the complex. It depends on [4Fe-4S] cluster as a cofactor.

It localises to the cell inner membrane. It catalyses the reaction a quinone + NADH + 5 H(+)(in) = a quinol + NAD(+) + 4 H(+)(out). NDH-1 shuttles electrons from NADH, via FMN and iron-sulfur (Fe-S) centers, to quinones in the respiratory chain. The immediate electron acceptor for the enzyme in this species is believed to be ubiquinone. Couples the redox reaction to proton translocation (for every two electrons transferred, four hydrogen ions are translocated across the cytoplasmic membrane), and thus conserves the redox energy in a proton gradient. The chain is NADH-quinone oxidoreductase subunit I from Beijerinckia indica subsp. indica (strain ATCC 9039 / DSM 1715 / NCIMB 8712).